Consider the following 613-residue polypeptide: Immunoglobulin superfamily member 8 (613 aa).

The N-terminal stretch at 1–27 is a signal peptide; sequence MGALRPTLLPPSLPLLLLLMLGMGCWA. Ig-like C2-type domains lie at 28 to 149, 162 to 286, 303 to 424, and 431 to 560; these read REVL…LRVL, PRGR…WAQI, SQLA…EAAS, and PVHV…WYQA. Over 28-579 the chain is Extracellular; it reads REVLVPEGPL…VYPYMHALDT (552 aa). Cysteines 49 and 127 form a disulfide. Asparagine 50 carries N-linked (GlcNAc...) asparagine glycosylation. Residues 155–174 form a disordered region; that stretch reads VSAAPPGPRGRQAPTSPPRM. The cysteines at positions 186 and 270 are disulfide-linked. The EWI motif signature appears at 274-276; it reads EWI. 2 disulfide bridges follow: cysteine 326–cysteine 406 and cysteine 462–cysteine 544. Asparagine 327 and asparagine 463 each carry an N-linked (GlcNAc...) asparagine glycan. At serine 518 the chain carries Phosphoserine. The helical transmembrane segment at 580-600 threads the bilayer; sequence LFVPLLVGTGVALVTGATVLG. At 601 to 613 the chain is on the cytoplasmic side; that stretch reads TITCCFMKRLRKR. Residues cysteine 604 and cysteine 605 are each lipidated (S-palmitoyl cysteine).

Interacts directly with CD82, CD81/tetraspanin-28 and CD9/tetraspanin-29. Also interacts with integrin alpha-3/beta-1 and integrin alpha-4/beta-1. Interacts with HSPA8; this interaction modulates migratory and antigen-presenting capacities of dendritic cells. Expressed in brain, kidney, testis, liver and placenta with moderate expression in all other tissues. Detected on a majority of B-cells, T-cells, and natural killer cells. Expressed on dendritic cells.

It is found in the cell membrane. Functionally, member of the immunoglobulin superfamily (IgSF) that links tetraspanin-enriched microdomains to the actin cytoskeleton and plays several important roles in innate and adaptive immunity. Acts as an inducible receptor of HSPA8 on dendritic cells to enhance the CCL21/SLC-dependent migration of activated mature dendritic cells while attenuating their antigen-specific stimulatory capacities. In complex with alpha-actinins ACTN1 and ACTN4, regulates actin dynamics in the immune synapse and subsequent T-cell activation. Inhibits the entry of several viruses such as hepatitis C Virus (HCV) or HIV-1. Mechanistically, promotes a change in CD81 organization at the plasma membrane by significantly restricting its diffusion which in turn influences CD81 interaction with Claudin-1/CLDN1, preventing CLDN1 from acting as a co-receptor required for HCV entry. Accumulates at the presynaptic terminal, the producer cell side of the virological synapse, to prevent HIV-1 Env-mediated cell-cell fusion. Highly expressed on malignant cells with antigen presentation defects, interacts with NK receptor KIR3DL2 to suppress NK-cell cytotoxicity. May participate in the regulation of neurite outgrowth and maintenance of the neural network in the adult brain. This is Immunoglobulin superfamily member 8 (IGSF8) from Homo sapiens (Human).